The following is a 331-amino-acid chain: Light-harvesting complex I LH35 proteins (331 aa).

It localises to the plastid. The protein localises to the chloroplast. This is Light-harvesting complex I LH35 proteins from Euglena gracilis.